Reading from the N-terminus, the 145-residue chain is NADH dehydrogenase [ubiquinone] 1 alpha subcomplex subunit 12 (145 aa).

Position 1 is an N-acetylmethionine (methionine 1).

This sequence belongs to the complex I NDUFA12 subunit family. Complex I is composed of 45 different subunits.

The protein localises to the mitochondrion inner membrane. Accessory subunit of the mitochondrial membrane respiratory chain NADH dehydrogenase (Complex I), that is believed not to be involved in catalysis. Complex I functions in the transfer of electrons from NADH to the respiratory chain. The immediate electron acceptor for the enzyme is believed to be ubiquinone. The chain is NADH dehydrogenase [ubiquinone] 1 alpha subcomplex subunit 12 (Ndufa12) from Mus musculus (Mouse).